The primary structure comprises 367 residues: Mitogen-activated protein kinase 12 (367 aa).

The Protein kinase domain maps to 27–311; it reads YRDLQPVGSG…AGEALAHPYF (285 aa). Residues 33 to 41 and Lys-56 contribute to the ATP site; that span reads VGSGAYGAV. Residue Asp-153 is the Proton acceptor of the active site. Residue Thr-183 is modified to Phosphothreonine; by MAP2K3 and MAP2K6. A TXY motif is present at residues 183 to 185; that stretch reads TGY. Tyr-185 is modified (phosphotyrosine).

The protein belongs to the protein kinase superfamily. CMGC Ser/Thr protein kinase family. MAP kinase subfamily. In terms of assembly, monomer. Interacts with the PDZ domain of the syntrophin SNTA1. Interacts with SH3BP5. Interacts with LIN7C, SCRIB and SYNJ2BP. Interacts with PTPN4; this interaction induces the activation of PTPN4 phosphatase activity. The cofactor is Mg(2+). In terms of processing, dually phosphorylated on Thr-183 and Tyr-185 by MAP2K3/MKK3 and MAP2K6/MKK6, which activates the enzyme. Post-translationally, ubiquitinated. Ubiquitination leads to degradation by the proteasome pathway. Highly expressed in skeletal muscle and heart.

Its subcellular location is the cytoplasm. The protein localises to the nucleus. It is found in the mitochondrion. It catalyses the reaction L-seryl-[protein] + ATP = O-phospho-L-seryl-[protein] + ADP + H(+). It carries out the reaction L-threonyl-[protein] + ATP = O-phospho-L-threonyl-[protein] + ADP + H(+). Activated by phosphorylation on threonine and tyrosine. MAP2K3/MKK3 and MAP2K6/MKK6 are both essential for the activation of MAPK12 induced by environmental stress, whereas MAP2K6/MKK6 is the major MAPK12 activator in response to TNF-alpha. Serine/threonine kinase which acts as an essential component of the MAP kinase signal transduction pathway. MAPK12 is one of the four p38 MAPKs which play an important role in the cascades of cellular responses evoked by extracellular stimuli such as pro-inflammatory cytokines or physical stress leading to direct activation of transcription factors such as ELK1 and ATF2. Accordingly, p38 MAPKs phosphorylate a broad range of proteins and it has been estimated that they may have approximately 200 to 300 substrates each. Some of the targets are downstream kinases such as MAPKAPK2, which are activated through phosphorylation and further phosphorylate additional targets. Plays a role in myoblast differentiation and also in the down-regulation of cyclin D1 in response to hypoxia in adrenal cells suggesting MAPK12 may inhibit cell proliferation while promoting differentiation. Phosphorylates DLG1. Following osmotic shock, MAPK12 in the cell nucleus increases its association with nuclear DLG1, thereby causing dissociation of DLG1-SFPQ complexes. This function is independent of its catalytic activity and could affect mRNA processing and/or gene transcription to aid cell adaptation to osmolarity changes in the environment. Regulates UV-induced checkpoint signaling and repair of UV-induced DNA damage and G2 arrest after gamma-radiation exposure. MAPK12 is involved in the regulation of SLC2A1 expression and basal glucose uptake in L6 myotubes; and negatively regulates SLC2A4 expression and contraction-mediated glucose uptake in adult skeletal muscle. C-Jun (JUN) phosphorylation is stimulated by MAPK14 and inhibited by MAPK12, leading to a distinct AP-1 regulation. MAPK12 is required for the normal kinetochore localization of PLK1, prevents chromosomal instability and supports mitotic cell viability. MAPK12-signaling is also positively regulating the expansion of transient amplifying myogenic precursor cells during muscle growth and regeneration. The protein is Mitogen-activated protein kinase 12 (MAPK12) of Homo sapiens (Human).